The primary structure comprises 145 residues: Peptide methionine sulfoxide reductase MsrB (145 aa).

A MsrB domain is found at 4–127 (SEELKQRIGD…NSAALKFIPY (124 aa)). Cysteine 116 serves as the catalytic Nucleophile.

Belongs to the MsrB Met sulfoxide reductase family.

The catalysed reaction is L-methionyl-[protein] + [thioredoxin]-disulfide + H2O = L-methionyl-(R)-S-oxide-[protein] + [thioredoxin]-dithiol. This chain is Peptide methionine sulfoxide reductase MsrB, found in Streptococcus pyogenes serotype M6 (strain ATCC BAA-946 / MGAS10394).